A 577-amino-acid polypeptide reads, in one-letter code: Cleavage stimulation factor subunit 2 (577 aa).

Position 14 is a phosphoserine (S14). The region spanning 16 to 94 (RSVFVGNIPY…RALRVDNAAS (79 aa)) is the RRM domain. The segment at 108–248 (APVIESPYGE…VNGAPPLMQA (141 aa)) is interactions with CSTF3 and SYMPK. A Glycyl lysine isopeptide (Lys-Gly) (interchain with G-Cter in SUMO2) cross-link involves residue K189. The interval 206–243 (QPVHGAGPGSGSNVSMNQQNPQAPQAQSLGGMHVNGAP) is disordered. A compositionally biased stretch (low complexity) spans 222 to 232 (NQQNPQAPQAQ). Position 308 is an omega-N-methylarginine (R308). The disordered stretch occupies residues 340–409 (EVEPRGYLGP…DGRGGRDPRG (70 aa)). Over residues 360–373 (PGHESRGPPPHELR) the composition is skewed to basic and acidic residues. One copy of the 1; approximate repeat lies at 410–414 (IDARG). The segment at 410-469 (IDARGMEARAMEARGLDARGLEARAMEARAMEARAMEARAMEARAMEVRGMEARGMDTRG) is 12 X 5 AA tandem repeats of M-E-A-R-[AG]. Repeat copies occupy residues 415 to 419 (MEARA) and 420 to 424 (MEARG). A 4; approximate repeat occupies 425 to 429 (LDARG). The stretch at 430 to 434 (LEARA) is one 5; approximate repeat. 4 tandem repeats follow at residues 435–439 (MEARA), 440–444 (MEARA), 445–449 (MEARA), and 450–454 (MEARA). Residues 455 to 459 (MEVRG) form a 10; approximate repeat. Copy 11 of the repeat occupies 460–464 (MEARG). The stretch at 465-469 (MDTRG) is one 12; approximate repeat. Omega-N-methylarginine occurs at positions 468 and 475. Positions 508–532 (GMQGASIQGGSQPGGFSPGQNQVTP) are disordered. The interaction with RPO2TC1 stretch occupies residues 514–577 (IQGGSQPGGF…EQIQKSTGAP (64 aa)). Phosphoserine occurs at positions 518 and 524.

As to quaternary structure, the CSTF complex is composed of CSTF1 (50 kDa subunit), CSTF2 (64 kDa subunit) and CSTF3 (77 kDa subunit). CSTF2 directly interacts with CSTF3, SYMPK and RPO2TC1. Interacts with HSF1 in heat-stressed cells. Interacts with CPSF2, CPSF3 and FIP1L1. Interacts with DDX1.

The protein localises to the nucleus. Functionally, one of the multiple factors required for polyadenylation and 3'-end cleavage of mammalian pre-mRNAs. This subunit is directly involved in the binding to pre-mRNAs. This is Cleavage stimulation factor subunit 2 (CSTF2) from Homo sapiens (Human).